We begin with the raw amino-acid sequence, 315 residues long: MANLKAIRDRIKTIKDTRKITEAMRLVAAAKVRRAQEQVMASRPFADRLAQVLYSLQTRLRFEDVDLPLLAKRPVKTVALLVVTGDRGLCGGYNTNVIRRAKERLQELEAEGLKYTLVIVGRKAAQYFQRRDYPIDAVYSGLEQIPSASEAGQIASELLSLFLSETVDRVELIYTKFVSLISSKPVVQTLLPLDPQGLETADDEIFRLTTRGSHLEVNREKVTSTLPALPSDMIFEQDPLQILDALLPLYLNNQLLRALQEAAASELAARMTAMNNASDNAQALIGTLTLSYNKARQAAITQEILEVVAGAEALR.

F-type ATPases have 2 components, CF(1) - the catalytic core - and CF(0) - the membrane proton channel. CF(1) has five subunits: alpha(3), beta(3), gamma(1), delta(1), epsilon(1). CF(0) has four main subunits: a(1), b(1), b'(1) and c(9-12).

It localises to the cellular thylakoid membrane. Produces ATP from ADP in the presence of a proton gradient across the membrane. The gamma chain is believed to be important in regulating ATPase activity and the flow of protons through the CF(0) complex. Its function is as follows. The complex from the organism is particularly stable to disruption and remains functional after 6 hrs at 55 degrees Celsius. This is ATP synthase gamma chain from Thermosynechococcus vestitus (strain NIES-2133 / IAM M-273 / BP-1).